Reading from the N-terminus, the 144-residue chain is Large ribosomal subunit protein uL16 (144 aa).

This sequence belongs to the universal ribosomal protein uL16 family. As to quaternary structure, part of the 50S ribosomal subunit.

Its function is as follows. Binds 23S rRNA and is also seen to make contacts with the A and possibly P site tRNAs. In Bacillus pumilus (strain SAFR-032), this protein is Large ribosomal subunit protein uL16.